The primary structure comprises 233 residues: Octanoyltransferase (233 aa).

In terms of domain architecture, BPL/LPL catalytic spans 38-218 (AGGPDTLLLL…AVCDALDGVL (181 aa)). Positions 57–66 (RRTEPHERPL) are enriched in basic and acidic residues. The interval 57–77 (RRTEPHERPLDGTPVVDTDRG) is disordered. Substrate-binding positions include 76 to 83 (RGGKITWH), 148 to 150 (AIG), and 161 to 163 (GFA). C179 serves as the catalytic Acyl-thioester intermediate.

It belongs to the LipB family.

It is found in the cytoplasm. It catalyses the reaction octanoyl-[ACP] + L-lysyl-[protein] = N(6)-octanoyl-L-lysyl-[protein] + holo-[ACP] + H(+). Its pathway is protein modification; protein lipoylation via endogenous pathway; protein N(6)-(lipoyl)lysine from octanoyl-[acyl-carrier-protein]: step 1/2. Its function is as follows. Catalyzes the transfer of endogenously produced octanoic acid from octanoyl-acyl-carrier-protein onto the lipoyl domains of lipoate-dependent enzymes. Lipoyl-ACP can also act as a substrate although octanoyl-ACP is likely to be the physiological substrate. The chain is Octanoyltransferase from Mycolicibacterium paratuberculosis (strain ATCC BAA-968 / K-10) (Mycobacterium paratuberculosis).